The sequence spans 259 residues: Protein FAM220A (259 aa).

The disordered stretch occupies residues 29–66 (GLKRRSEKRNPSPSDVPSWTDQPVADTHGKSRAMAAAS). Residues 39–49 (PSPSDVPSWTD) are compositionally biased toward polar residues.

Interacts with transcriptional activator STAT3; the interaction occurs in both the nucleus and the cytoplasm, is enhanced by IL6 and promotes STAT3 dephosphorylation, leading to negative regulation of STAT3 transcriptional activator activity. Can interact with both unphosphorylated and phosphorylated STAT3 but interacts preferentially with phosphorylated STAT3 in the nucleus. Interacts with protein phosphatase PTPN2/TC45; this promotes interaction of PTPN2 with STAT3, leading to dephosphorylation of STAT3 by PTPN2.

The protein localises to the nucleus. It localises to the cytoplasm. Its subcellular location is the cytoplasmic vesicle. The protein resides in the secretory vesicle. It is found in the acrosome. Promotes dephosphorylation of transcriptional activator STAT3 by interacting with both STAT3 and protein phosphatase PTPN2. This promotes interaction of PTPN2 with STAT3 and mediates STAT3 dephosphorylation by PTPN2, leading to negative regulation of STAT3 transcriptional activator activity. May be required for spermiogenesis or sperm function. This Rattus norvegicus (Rat) protein is Protein FAM220A (Fam220a).